Here is a 1211-residue protein sequence, read N- to C-terminus: DNA-directed RNA polymerase subunit beta' (1211 aa).

Residues C60, C62, C75, and C78 each contribute to the Zn(2+) site. Residues D450, D452, and D454 each contribute to the Mg(2+) site. Positions 819, 893, 900, and 903 each coordinate Zn(2+).

The protein belongs to the RNA polymerase beta' chain family. In terms of assembly, the RNAP catalytic core consists of 2 alpha, 1 beta, 1 beta' and 1 omega subunit. When a sigma factor is associated with the core the holoenzyme is formed, which can initiate transcription. Requires Mg(2+) as cofactor. It depends on Zn(2+) as a cofactor.

The enzyme catalyses RNA(n) + a ribonucleoside 5'-triphosphate = RNA(n+1) + diphosphate. DNA-dependent RNA polymerase catalyzes the transcription of DNA into RNA using the four ribonucleoside triphosphates as substrates. This chain is DNA-directed RNA polymerase subunit beta', found in Streptococcus equi subsp. equi (strain 4047).